A 70-amino-acid chain; its full sequence is Peptide BmKn2 (70 aa).

The N-terminal stretch at 1–23 (MKSQTFFLLFLVVLLLAISQSEA) is a signal peptide. Phe36 is modified (phenylalanine amide). Positions 40 to 70 (SMRDMDTMKYLYDPSLSAADLKTLQKLMENY) are excised as a propeptide.

Belongs to the non-disulfide-bridged peptide (NDBP) superfamily. Short antimicrobial peptide (group 4) family. As to expression, expressed by the venom gland.

It is found in the secreted. The protein resides in the target cell membrane. Functionally, antimicrobial peptide with potent activity against bacteria. Has strong antibacterial activity against Gram-positive bacteria S.aureus, M.luteus, B.subtilis, and Gram-negative bacteria E.coli, P.aeruginosa and N.gonorrhoeae. Also shows low activity against HIV-1 PV. The protein is Peptide BmKn2 of Olivierus martensii (Manchurian scorpion).